The chain runs to 327 residues: Biotin synthase (327 aa).

In terms of domain architecture, Radical SAM core spans phenylalanine 44 to arginine 273. The [4Fe-4S] cluster site is built by cysteine 62, cysteine 66, and cysteine 69. Residues cysteine 138, cysteine 198, and arginine 268 each contribute to the [2Fe-2S] cluster site.

It belongs to the radical SAM superfamily. Biotin synthase family. As to quaternary structure, homodimer. The cofactor is [4Fe-4S] cluster. It depends on [2Fe-2S] cluster as a cofactor.

The catalysed reaction is (4R,5S)-dethiobiotin + (sulfur carrier)-SH + 2 reduced [2Fe-2S]-[ferredoxin] + 2 S-adenosyl-L-methionine = (sulfur carrier)-H + biotin + 2 5'-deoxyadenosine + 2 L-methionine + 2 oxidized [2Fe-2S]-[ferredoxin]. It participates in cofactor biosynthesis; biotin biosynthesis; biotin from 7,8-diaminononanoate: step 2/2. In terms of biological role, catalyzes the conversion of dethiobiotin (DTB) to biotin by the insertion of a sulfur atom into dethiobiotin via a radical-based mechanism. This is Biotin synthase from Parabacteroides distasonis (strain ATCC 8503 / DSM 20701 / CIP 104284 / JCM 5825 / NCTC 11152).